Consider the following 222-residue polypeptide: MGLVVKDISKTFGEKSSKTEVLKDINFEVKDGEFIILNGASGSGKTTLLTILGGLLSQTSGDVVYEGKSLFERHTNKAHLRLNDIGFIFQASHLVPYLKVLDQLTLIGKEAGMSSKEAQARAKELLTKIGLEEQLNSYPHMLSGGQQQRVAIMRALMNHPKIVLADEPTASLDASRAQEVVEMIRKQIKANQMIGIMITHDESLFKYADRIVQLYDGKIKNS.

Positions 3-222 (LVVKDISKTF…QLYDGKIKNS (220 aa)) constitute an ABC transporter domain. Position 39–46 (39–46 (GASGSGKT)) interacts with ATP.

It belongs to the ABC transporter superfamily. HrtA family. The complex is composed of two ATP-binding proteins (HrtA), two transmembrane proteins (HrtB) and a solute-binding protein.

The protein localises to the cell membrane. Its function is as follows. Part of the ABC transporter complex hrt involved in hemin import. Responsible for energy coupling to the transport system. This Staphylococcus epidermidis (strain ATCC 12228 / FDA PCI 1200) protein is Putative hemin import ATP-binding protein HrtA (hrtA).